We begin with the raw amino-acid sequence, 221 residues long: Leucine rich adaptor protein 1-like (221 aa).

The residue at position 1 (Met1) is an N-acetylmethionine. The interval 24–81 (LARSLRGEELAPREGAADPSGVGGSCSSSSSCSSFAPSVSSSSSSSPASGSPRRSHPS) is disordered. The span at 28 to 39 (LRGEELAPREGA) shows a compositional bias: basic and acidic residues. The span at 48-75 (SCSSSSSCSSFAPSVSSSSSSSPASGSP) shows a compositional bias: low complexity.

The chain is Leucine rich adaptor protein 1-like (Lurap1l) from Mus musculus (Mouse).